The primary structure comprises 212 residues: Uracil phosphoribosyltransferase (212 aa).

5-phospho-alpha-D-ribose 1-diphosphate is bound by residues R78, R103, and 130–138 (DPMLATGGS). Uracil contacts are provided by residues I193 and 198–200 (GDA). D199 is a binding site for 5-phospho-alpha-D-ribose 1-diphosphate.

The protein belongs to the UPRTase family. The cofactor is Mg(2+).

The catalysed reaction is UMP + diphosphate = 5-phospho-alpha-D-ribose 1-diphosphate + uracil. It functions in the pathway pyrimidine metabolism; UMP biosynthesis via salvage pathway; UMP from uracil: step 1/1. Allosterically activated by GTP. Functionally, catalyzes the conversion of uracil and 5-phospho-alpha-D-ribose 1-diphosphate (PRPP) to UMP and diphosphate. This Bordetella avium (strain 197N) protein is Uracil phosphoribosyltransferase.